The primary structure comprises 60 residues: Large ribosomal subunit protein uL30 (60 aa).

This sequence belongs to the universal ribosomal protein uL30 family. Part of the 50S ribosomal subunit.

This Streptococcus pyogenes serotype M1 protein is Large ribosomal subunit protein uL30.